The following is a 602-amino-acid chain: Probable pectinesterase/pectinesterase inhibitor 64 (602 aa).

The chain crosses the membrane as a helical span at residues 36 to 56 (ILIIIAASCILLLLISLLIYA). The tract at residues 62-91 (SRNHHNPSHQTPTSDDHPPPETPPSPPPIA) is disordered. Residues 81-90 (PETPPSPPPI) are compositionally biased toward pro residues. Residues 87 to 237 (PPPIAQIRLA…VNLTGNALSM (151 aa)) are pectinesterase inhibitor 64. Asn98, Asn156, Asn212, Asn229, and Asn315 each carry an N-linked (GlcNAc...) asparagine glycan. The segment at 288–595 (DVTVCKNGGK…YSVANFIQAD (308 aa)) is pectinesterase 64. Residues Thr367 and Gln397 each coordinate substrate. Asp420 functions as the Proton donor; for pectinesterase activity in the catalytic mechanism. Residues Cys434 and Cys454 are joined by a disulfide bond. Asp441 acts as the Nucleophile; for pectinesterase activity in catalysis. 2 N-linked (GlcNAc...) asparagine glycosylation sites follow: Asn492 and Asn496. Substrate contacts are provided by Arg518 and Trp520.

In the N-terminal section; belongs to the PMEI family. The protein in the C-terminal section; belongs to the pectinesterase family. Expressed in siliques.

It is found in the membrane. It catalyses the reaction [(1-&gt;4)-alpha-D-galacturonosyl methyl ester](n) + n H2O = [(1-&gt;4)-alpha-D-galacturonosyl](n) + n methanol + n H(+). Its pathway is glycan metabolism; pectin degradation; 2-dehydro-3-deoxy-D-gluconate from pectin: step 1/5. Acts in the modification of cell walls via demethylesterification of cell wall pectin. This is Probable pectinesterase/pectinesterase inhibitor 64 (PME64) from Arabidopsis thaliana (Mouse-ear cress).